A 314-amino-acid chain; its full sequence is BCL2/adenovirus E1B 19 kDa protein-interacting protein 2 (314 aa).

Residues 1–21 form a disordered region; sequence MEGVELKEEWQDEDFPIPLPE. Acidic residues predominate over residues 10 to 21; that stretch reads WQDEDFPIPLPE. Phosphoserine is present on residues Ser-41 and Ser-77. Residues 76–100 are disordered; it reads ESGEIDLDGLDTPSENSNEFEWEDD. Position 87 is a phosphothreonine (Thr-87). A phosphoserine mark is found at Ser-89, Ser-92, and Ser-114. The 158-residue stretch at 147–304 folds into the CRAL-TRIO domain; it reads IEPYKKVISH…CIKQVDQELN (158 aa).

It localises to the cytoplasm. The protein resides in the perinuclear region. Functionally, implicated in the suppression of cell death. Interacts with the BCL-2 and adenovirus E1B 19 kDa proteins. The protein is BCL2/adenovirus E1B 19 kDa protein-interacting protein 2 (BNIP2) of Homo sapiens (Human).